We begin with the raw amino-acid sequence, 653 residues long: ATP-dependent zinc metalloprotease FtsH 1 (653 aa).

The Cytoplasmic segment spans residues 1-8 (MAENKWLR). Residues 9 to 29 (NGFVWIVLIIAVVALWVTFMK) traverse the membrane as a helical segment. At 30–110 (DGGSAREENF…RVNPASQWGN (81 aa)) the chain is on the extracellular side. The chain crosses the membrane as a helical span at residues 111 to 131 (WLSALTFILPTLFLIGIVIFM). Over 132-653 (MRQAQGTNNQ…SPTMRPQPAS (522 aa)) the chain is Cytoplasmic. 203 to 210 (GPPGTGKT) serves as a coordination point for ATP. His-425 contacts Zn(2+). Residue Glu-426 is part of the active site. Positions 429 and 501 each coordinate Zn(2+). The disordered stretch occupies residues 604 to 653 (EPRPRPQLVGPPVTRPAALAHKTEEADRGGERSPHPQPHPSPTMRPQPAS). Basic and acidic residues predominate over residues 624–637 (HKTEEADRGGERSP). Positions 638–653 (HPQPHPSPTMRPQPAS) are enriched in pro residues.

In the central section; belongs to the AAA ATPase family. The protein in the C-terminal section; belongs to the peptidase M41 family. In terms of assembly, homohexamer. Zn(2+) is required as a cofactor.

The protein localises to the cell membrane. In terms of biological role, acts as a processive, ATP-dependent zinc metallopeptidase for both cytoplasmic and membrane proteins. Plays a role in the quality control of integral membrane proteins. The chain is ATP-dependent zinc metalloprotease FtsH 1 from Sphaerobacter thermophilus (strain ATCC 49802 / DSM 20745 / KCCM 41009 / NCIMB 13125 / S 6022).